The chain runs to 219 residues: Dynein light chain Tctex-type 4 (219 aa).

The interval 1 to 84 is disordered; the sequence is MACRTLPSRR…RRPSLGPVPP (84 aa). Basic and acidic residues predominate over residues 9 to 20; it reads RRQEEETTKDLA. Ser-64 bears the Phosphoserine mark.

This sequence belongs to the dynein light chain Tctex-type family. As to quaternary structure, interacts with ENG/endoglin, TGFBR2 and TGFBR3. Interacts with PPP1CC.

The protein resides in the cell projection. The protein localises to the cilium. It localises to the flagellum. It is found in the cytoplasmic vesicle. Its subcellular location is the secretory vesicle. The protein resides in the acrosome. The protein localises to the cytoplasm. It localises to the cytoskeleton. It is found in the cilium axoneme. Its subcellular location is the nucleus. The protein resides in the microtubule organizing center. This Mus musculus (Mouse) protein is Dynein light chain Tctex-type 4 (Dynlt4).